The following is a 150-amino-acid chain: Large ribosomal subunit protein bL9 (150 aa).

It belongs to the bacterial ribosomal protein bL9 family.

Binds to the 23S rRNA. In Streptococcus pyogenes serotype M6 (strain ATCC BAA-946 / MGAS10394), this protein is Large ribosomal subunit protein bL9.